A 130-amino-acid chain; its full sequence is Small ribosomal subunit protein uS9 (130 aa).

The protein belongs to the universal ribosomal protein uS9 family.

In Exiguobacterium sp. (strain ATCC BAA-1283 / AT1b), this protein is Small ribosomal subunit protein uS9.